Consider the following 125-residue polypeptide: Large ribosomal subunit protein bL12 (125 aa).

Belongs to the bacterial ribosomal protein bL12 family. As to quaternary structure, homodimer. Part of the ribosomal stalk of the 50S ribosomal subunit. Forms a multimeric L10(L12)X complex, where L10 forms an elongated spine to which 2 to 4 L12 dimers bind in a sequential fashion. Binds GTP-bound translation factors.

Its function is as follows. Forms part of the ribosomal stalk which helps the ribosome interact with GTP-bound translation factors. Is thus essential for accurate translation. The polypeptide is Large ribosomal subunit protein bL12 (Thermus thermophilus (strain ATCC BAA-163 / DSM 7039 / HB27)).